The primary structure comprises 190 residues: 7-methyl-GTP pyrophosphatase (190 aa).

Aspartate 69 (proton acceptor) is an active-site residue.

It belongs to the Maf family. YceF subfamily. Requires a divalent metal cation as cofactor.

It is found in the cytoplasm. It carries out the reaction N(7)-methyl-GTP + H2O = N(7)-methyl-GMP + diphosphate + H(+). Nucleoside triphosphate pyrophosphatase that hydrolyzes 7-methyl-GTP (m(7)GTP). May have a dual role in cell division arrest and in preventing the incorporation of modified nucleotides into cellular nucleic acids. The sequence is that of 7-methyl-GTP pyrophosphatase from Xanthomonas axonopodis pv. citri (strain 306).